The chain runs to 405 residues: Angiopoietin-related protein 4 (405 aa).

The signal sequence occupies residues 1 to 23 (MRCAPTAGAALVLCAATAGLLSA). Positions 54-146 (GLREHVERTR…QNLQSQIDLL (93 aa)) form a coiled coil. N-linked (GlcNAc...) asparagine glycosylation occurs at Asn-176. Positions 178–400 (TRLHRPPRDC…ATTLLIQPME (223 aa)) constitute a Fibrinogen C-terminal domain. Cys-187 and Cys-215 are joined by a disulfide. N-linked (GlcNAc...) asparagine glycans are attached at residues Asn-231 and Asn-237. A disulfide bridge links Cys-340 with Cys-353.

Homooligomer; disulfide-linked via Cys residues in the N-terminal part of the protein. The homooligomer undergoes proteolytic processing to release its carboxyl fibrinogen-like domain, which circulates as a monomer. The homooligomer unprocessed form is able to interact with the extracellular matrix. Post-translationally, N-glycosylated. In terms of processing, forms disulfide-linked dimers and tetramers. Cleaved into a smaller N-terminal chain and a larger chain that contains the fibrinogen C-terminal domain; both cleaved and uncleaved forms are detected in the extracellular space. The cleaved form is not present within the cell.

The protein localises to the secreted. The protein resides in the extracellular space. Its subcellular location is the extracellular matrix. Mediates inactivation of the lipoprotein lipase LPL, and thereby plays a role in the regulation of triglyceride clearance from the blood serum and in lipid metabolism. May also play a role in regulating glucose homeostasis and insulin sensitivity. Inhibits proliferation, migration, and tubule formation of endothelial cells and reduces vascular leakage. Upon heterologous expression, inhibits the adhesion of endothelial cell to the extracellular matrix (ECM), and inhibits the reorganization of the actin cytoskeleton, formation of actin stress fibers and focal adhesions in endothelial cells that have adhered to ANGPTL4-containing ECM (in vitro). Depending on context, may modulate tumor-related angiogenesis. Functionally, mediates inactivation of the lipoprotein lipase LPL, and thereby plays an important role in the regulation of triglyceride clearance from the blood serum and in lipid metabolism. Has higher activity in LPL inactivation than the uncleaved protein. This is Angiopoietin-related protein 4 (Angptl4) from Rattus norvegicus (Rat).